Consider the following 205-residue polypeptide: Translation initiation factor 2 subunit beta (205 aa).

The 59-residue stretch at 145 to 203 (GIEIGKEYTVTIESTGSAGEGIARYQGYTIYVPKAKKGERVKIIIRKIKRNVAIAELAD) folds into the TRAM domain.

Belongs to the eIF-2-beta/eIF-5 family. Heterotrimer composed of an alpha, a beta and a gamma chain.

In terms of biological role, eIF-2 functions in the early steps of protein synthesis by forming a ternary complex with GTP and initiator tRNA. The polypeptide is Translation initiation factor 2 subunit beta (Picrophilus torridus (strain ATCC 700027 / DSM 9790 / JCM 10055 / NBRC 100828 / KAW 2/3)).